Consider the following 298-residue polypeptide: N-acetylmuramic acid 6-phosphate etherase (298 aa).

One can recognise an SIS domain in the interval 55-218; it reads IHAQVSGGGR…STGLMIKSGK (164 aa). Glu83 functions as the Proton donor in the catalytic mechanism. The active site involves Glu114.

The protein belongs to the GCKR-like family. MurNAc-6-P etherase subfamily. In terms of assembly, homodimer.

It catalyses the reaction N-acetyl-D-muramate 6-phosphate + H2O = N-acetyl-D-glucosamine 6-phosphate + (R)-lactate. It participates in amino-sugar metabolism; 1,6-anhydro-N-acetylmuramate degradation. Its pathway is amino-sugar metabolism; N-acetylmuramate degradation. It functions in the pathway cell wall biogenesis; peptidoglycan recycling. Functionally, specifically catalyzes the cleavage of the D-lactyl ether substituent of MurNAc 6-phosphate, producing GlcNAc 6-phosphate and D-lactate. Together with AnmK, is also required for the utilization of anhydro-N-acetylmuramic acid (anhMurNAc) either imported from the medium or derived from its own cell wall murein, and thus plays a role in cell wall recycling. This chain is N-acetylmuramic acid 6-phosphate etherase, found in Escherichia coli O157:H7 (strain EC4115 / EHEC).